A 699-amino-acid polypeptide reads, in one-letter code: MKQHIFLVEIGTEELPAKELRRLAQYFTANFINELNANGINYNDINWFAAPRRLAIKVNSINSIPTKSYMEKRGPAINKAFDAEGKPTPAAIGWARNCGITVNQAERFTTDKGEWLIYRMLVETKPVQKLLCSMVYNALTKFSSLTKIMRWGEKNYKFIRPVRTITLLLDDLVIPGNIFGIDSNRIILGHRFMGESVISLLHADYYPNVLLERGRVIADYELRKDTIRRNIEIMVKKIGGFTKINDKLLEEVTSLVDWPIVLTASFNANFLRIPAEALIYTMENNQKYFPVYDAKGKLLPYFIFVTNIESTNTNQIVVGNEKVMRSRLADVEFFFNIDRKQKLEDYLLLLGQVKFQMELGTLLDKSYRLEILASWIAEIISTDIKQAARAALISKCDLMTQMVFEYPEIQGIIGMHYATLDGETELVALAQKEQYLPLFSGDNLPTTLVSCAVSIADKMDNLAGIFGINQQYTKQANDPLALRRAALGILRIIIEKQLPIDLLSLIDKAVFLYNKKLTNTIVVEQIIHFMLNRLLSWYKKQGYSIDTINAVMAVYKPTGKLIHFDARLRAVHYLRQIPHAENLTKRIFNIIAKHKDLINGEVNFTLLKQPEEVILINSITQLHKKLILFFEKGKYQEALWELINLREIINTFFSKIIIMTENKELCINRLNIINKVRQLFLIIADFSLLQCSKEKSNVD.

Belongs to the class-II aminoacyl-tRNA synthetase family. As to quaternary structure, tetramer of two alpha and two beta subunits.

It is found in the cytoplasm. The enzyme catalyses tRNA(Gly) + glycine + ATP = glycyl-tRNA(Gly) + AMP + diphosphate. This chain is Glycine--tRNA ligase beta subunit, found in Baumannia cicadellinicola subsp. Homalodisca coagulata.